The chain runs to 345 residues: Phosphoribosylformylglycinamidine cyclo-ligase (345 aa).

The protein belongs to the AIR synthase family.

It localises to the cytoplasm. It catalyses the reaction 2-formamido-N(1)-(5-O-phospho-beta-D-ribosyl)acetamidine + ATP = 5-amino-1-(5-phospho-beta-D-ribosyl)imidazole + ADP + phosphate + H(+). It participates in purine metabolism; IMP biosynthesis via de novo pathway; 5-amino-1-(5-phospho-D-ribosyl)imidazole from N(2)-formyl-N(1)-(5-phospho-D-ribosyl)glycinamide: step 2/2. This Salmonella typhi protein is Phosphoribosylformylglycinamidine cyclo-ligase.